The sequence spans 112 residues: Protein GAST1 (112 aa).

The first 25 residues, 1 to 25, serve as a signal peptide directing secretion; that stretch reads MAGKMSIVLFVLLVVFLTQNQVSRA.

This sequence belongs to the GASA family. Six disulfide bonds may be present. As to expression, all shoot organs.

It is found in the secreted. This is Protein GAST1 (GAST1) from Solanum lycopersicum (Tomato).